The sequence spans 128 residues: Large ribosomal subunit protein bL20 (128 aa).

The protein belongs to the bacterial ribosomal protein bL20 family.

Functionally, binds directly to 23S ribosomal RNA and is necessary for the in vitro assembly process of the 50S ribosomal subunit. It is not involved in the protein synthesizing functions of that subunit. The chain is Large ribosomal subunit protein bL20 from Kocuria rhizophila (strain ATCC 9341 / DSM 348 / NBRC 103217 / DC2201).